We begin with the raw amino-acid sequence, 876 residues long: Protein TORMOZ EMBRYO DEFECTIVE (876 aa).

WD repeat units follow at residues 58–97, 100–139, 142–183, 190–229, 255–294, 308–347, 356–396, 399–441, 444–484, 497–536, 539–580, 581–620, and 623–662; these read GESDTLTALALSPDDKLLFSAGHSRQIRVWDLETLKCIRS, GHEGPVMGMACHASGGLLATAGADRKVLVWDVDGGFCTHY, GHKG…TEKK, KHFSAVTSIALSEDGLTLFSAGRDKVVNLWDLHDYSCKAT, LDQKKSKKKESDSQATYFITVGERGVVRIWKSEGSICLYE, ESKRGFTAAAMLPSDHGLLCVTADQQFFFYSVVENVEETE, GYNE…CSYV, GHKE…CIGV, GHNG…EDSE, AHDKDINSVAVARNDSLVCTGSEDRTASIWRLPDLVHVVT, GHKR…KTFE, GHTSSVLRASFITDGTQFVSCGADGLLKLWNVNTSECIAT, and QHEDKVWALAVGKKTEMIATGGGDAVINLWHDSTASDKED. The tract at residues 816–876 is disordered; it reads VETEYPKDEK…AEAQGSVIAV (61 aa). A compositionally biased stretch (basic and acidic residues) spans 819–831; that stretch reads EYPKDEKKKEKDV. Positions 848–855 match the Nuclear localization signal motif; it reads SRKRKSQK. Residues 849 to 864 show a composition bias toward basic residues; the sequence is RKRKSQKSKGKSNKKR.

Preferentially expressed in dividing cells in a variety of tissues and meristematic regions.

It localises to the nucleus. It is found in the nucleolus. In terms of biological role, essential protein involved in the regulation of cell division planes during embryogenesis which defines cell patterning, especially longitudinal division planes of the proembryo, probably via the regulation of embryo patterning genes expression patterns. This Arabidopsis thaliana (Mouse-ear cress) protein is Protein TORMOZ EMBRYO DEFECTIVE.